Consider the following 121-residue polypeptide: Protein ripply2.1 (121 aa).

The segment at 1 to 69 (MEPNQQRSCG…DKGKPPSFQH (69 aa)) is disordered. Residues 29-32 (WRPW) carry the WRPW motif motif. The span at 39–57 (HVQNPPTAQQQFYSDNQSH) shows a compositional bias: polar residues. Residues 69-104 (HPVKLFWPKSRCYDFMYQEAEELLRHFPVQATISLY) form a ripply homology domain region.

This sequence belongs to the ripply family. As to expression, expressed in the presomitic mesoderm (PSM) in the anterior halves of somitomeres S-0, S-I and S-II and in the newly formed somites.

Its subcellular location is the nucleus. In terms of biological role, required during somitogenesis to regulate somite differentiation and the positioning of the presomitic mesoderm-front. Represses the expression of genes involved in somite segmentation by acting with the corepressor tle4 to down-regulate the transcriptional activity of tbx6. Also regulates retinoic acid signaling during somitogenesis and is necessary for the expression of aldh1a2/raldh2. This is Protein ripply2.1 (ripply2.1) from Xenopus laevis (African clawed frog).